Reading from the N-terminus, the 201-residue chain is Probable thymidylate kinase (201 aa).

ATP is bound at residue 10–17 (GIDGSGKS).

It belongs to the thymidylate kinase family.

The catalysed reaction is dTMP + ATP = dTDP + ADP. The protein is Probable thymidylate kinase of Methanococcoides burtonii (strain DSM 6242 / NBRC 107633 / OCM 468 / ACE-M).